A 570-amino-acid chain; its full sequence is MNSTPDLISPQKSNSSNSYELESGRSKAMNTPEGKNESFHDNLSESQVQPAVAPPNTGKGVYVTVSICCVMVAFGGFIFGWDTGTISGFVAQTDFLRRFGMKHHDGSHYLSKVRTGLIVSIFNIGCAIGGIVLAKLGDMYGRRIGLIVVVVIYTIGIIIQIASINKWYQYFIGRIISGLGVGGITVLSPMLISEVAPSEMRGTLVSCYQVMITLGIFLGYCTNFGTKNYSNSVQWRVPLGLCFAWALFMIGGMMFVPESPRYLVEAGRIDEARASLAKVNKCPPDHPYIQYELETIEASVEEMRAAGTASWGELFTGKPAMFQRTMMGIMIQSLQQLTGDNYFFYYGTIVFQAVGLSDSFETSIVFGVVNFFSTCCSLYTVDRFGRRNCLMWGAVGMVCCYVVYASVGVTRLWPNGQDQPSSKGAGNCMIVFACFYIFCFATTWAPIAYVVISECFPLRVKSKCMSIASAANWIWGFLISFFTPFITGAINFYYGYVFMGCMVFAYFYVFFFVPETKGLSLEEVNDMYAEGVLPWKSASWVPVSKRGADYNADDLMHDDQPFYKSLFSRK.

The segment covering 1–20 (MNSTPDLISPQKSNSSNSYE) has biased composition (polar residues). A disordered region spans residues 1 to 51 (MNSTPDLISPQKSNSSNSYELESGRSKAMNTPEGKNESFHDNLSESQVQPA). The Cytoplasmic portion of the chain corresponds to 1–60 (MNSTPDLISPQKSNSSNSYELESGRSKAMNTPEGKNESFHDNLSESQVQPAVAPPNTGKG). Phosphoserine is present on residues serine 23, serine 38, and serine 44. Residues 34-43 (GKNESFHDNL) are compositionally biased toward basic and acidic residues. The chain crosses the membrane as a helical span at residues 61-81 (VYVTVSICCVMVAFGGFIFGW). The Extracellular segment spans residues 82-116 (DTGTISGFVAQTDFLRRFGMKHHDGSHYLSKVRTG). The chain crosses the membrane as a helical span at residues 117–137 (LIVSIFNIGCAIGGIVLAKLG). The Cytoplasmic portion of the chain corresponds to 138–143 (DMYGRR). A helical transmembrane segment spans residues 144–164 (IGLIVVVVIYTIGIIIQIASI). The Extracellular portion of the chain corresponds to 165–174 (NKWYQYFIGR). Residues 175 to 195 (IISGLGVGGITVLSPMLISEV) traverse the membrane as a helical segment. The Cytoplasmic segment spans residues 196-201 (APSEMR). Residues 202-222 (GTLVSCYQVMITLGIFLGYCT) form a helical membrane-spanning segment. Residues 223–236 (NFGTKNYSNSVQWR) are Extracellular-facing. The N-linked (GlcNAc...) asparagine glycan is linked to asparagine 228. The helical transmembrane segment at 237 to 257 (VPLGLCFAWALFMIGGMMFVP) threads the bilayer. Over 258–340 (ESPRYLVEAG…IQSLQQLTGD (83 aa)) the chain is Cytoplasmic. The helical transmembrane segment at 341–357 (NYFFYYGTIVFQAVGLS) threads the bilayer. Topologically, residues 358–363 (DSFETS) are extracellular. A helical membrane pass occupies residues 364-381 (IVFGVVNFFSTCCSLYTV). The Cytoplasmic portion of the chain corresponds to 382-388 (DRFGRRN). The helical transmembrane segment at 389–409 (CLMWGAVGMVCCYVVYASVGV) threads the bilayer. The Extracellular portion of the chain corresponds to 410–431 (TRLWPNGQDQPSSKGAGNCMIV). The helical transmembrane segment at 432-452 (FACFYIFCFATTWAPIAYVVI) threads the bilayer. Residues 453–469 (SECFPLRVKSKCMSIAS) lie on the Cytoplasmic side of the membrane. Residues 470 to 490 (AANWIWGFLISFFTPFITGAI) traverse the membrane as a helical segment. Residue asparagine 491 is a topological domain, extracellular. The chain crosses the membrane as a helical span at residues 492–512 (FYYGYVFMGCMVFAYFYVFFF). The Cytoplasmic portion of the chain corresponds to 513 to 570 (VPETKGLSLEEVNDMYAEGVLPWKSASWVPVSKRGADYNADDLMHDDQPFYKSLFSRK).

It belongs to the major facilitator superfamily. Sugar transporter (TC 2.A.1.1) family.

It is found in the membrane. Functionally, low-affinity glucose transporter. HXT1 is as well involved in the transport of mannose. In Saccharomyces cerevisiae (strain ATCC 204508 / S288c) (Baker's yeast), this protein is Low-affinity glucose transporter HXT1 (HXT1).